The chain runs to 261 residues: Cytochrome c oxidase subunit 3 (261 aa).

The Mitochondrial matrix segment spans residues 1–15 (MTHQTHAYHMVNPSP). Residues 16-34 (WPLTGALSALLMTSGLIMW) form a helical membrane-spanning segment. Residues 35-40 (FHFNSM) are Mitochondrial intermembrane-facing. A helical membrane pass occupies residues 41-66 (YLLMLGLTTNTLTMYQWWRDIVREST). Topologically, residues 67 to 72 (FQGHHT) are mitochondrial matrix. The helical transmembrane segment at 73 to 105 (PIVQKGLRYGMILFIVSEVFFFAGFFWAFYHSS) threads the bilayer. The Mitochondrial intermembrane segment spans residues 106–128 (LAPTPELGGCWPPTGITPLNPME). The helical transmembrane segment at 129–152 (VPLLNTSVLLASGVSITWAHHSLM) threads the bilayer. At 153–155 (EGN) the chain is on the mitochondrial matrix side. A helical transmembrane segment spans residues 156 to 183 (RKHMLQALFITISLGIYFTLLQASEYYE). Residues 184–190 (TPFTISD) lie on the Mitochondrial intermembrane side of the membrane. A helical transmembrane segment spans residues 191-223 (GIYGSTFFMATGFHGLHVIIGSTFLIVCFVRQL). Residues 224–232 (KFHFTSNHH) lie on the Mitochondrial matrix side of the membrane. A helical transmembrane segment spans residues 233–256 (FGFEAAAWYWHFVDVVWLFLYVSI). The Mitochondrial intermembrane segment spans residues 257–261 (YWWGS).

This sequence belongs to the cytochrome c oxidase subunit 3 family. As to quaternary structure, component of the cytochrome c oxidase (complex IV, CIV), a multisubunit enzyme composed of 14 subunits. The complex is composed of a catalytic core of 3 subunits MT-CO1, MT-CO2 and MT-CO3, encoded in the mitochondrial DNA, and 11 supernumerary subunits COX4I, COX5A, COX5B, COX6A, COX6B, COX6C, COX7A, COX7B, COX7C, COX8 and NDUFA4, which are encoded in the nuclear genome. The complex exists as a monomer or a dimer and forms supercomplexes (SCs) in the inner mitochondrial membrane with NADH-ubiquinone oxidoreductase (complex I, CI) and ubiquinol-cytochrome c oxidoreductase (cytochrome b-c1 complex, complex III, CIII), resulting in different assemblies (supercomplex SCI(1)III(2)IV(1) and megacomplex MCI(2)III(2)IV(2)).

It localises to the mitochondrion inner membrane. The enzyme catalyses 4 Fe(II)-[cytochrome c] + O2 + 8 H(+)(in) = 4 Fe(III)-[cytochrome c] + 2 H2O + 4 H(+)(out). Its function is as follows. Component of the cytochrome c oxidase, the last enzyme in the mitochondrial electron transport chain which drives oxidative phosphorylation. The respiratory chain contains 3 multisubunit complexes succinate dehydrogenase (complex II, CII), ubiquinol-cytochrome c oxidoreductase (cytochrome b-c1 complex, complex III, CIII) and cytochrome c oxidase (complex IV, CIV), that cooperate to transfer electrons derived from NADH and succinate to molecular oxygen, creating an electrochemical gradient over the inner membrane that drives transmembrane transport and the ATP synthase. Cytochrome c oxidase is the component of the respiratory chain that catalyzes the reduction of oxygen to water. Electrons originating from reduced cytochrome c in the intermembrane space (IMS) are transferred via the dinuclear copper A center (CU(A)) of subunit 2 and heme A of subunit 1 to the active site in subunit 1, a binuclear center (BNC) formed by heme A3 and copper B (CU(B)). The BNC reduces molecular oxygen to 2 water molecules using 4 electrons from cytochrome c in the IMS and 4 protons from the mitochondrial matrix. This is Cytochrome c oxidase subunit 3 (MT-CO3) from Phoca vitulina (Harbor seal).